Reading from the N-terminus, the 445-residue chain is Argininosuccinate synthase (445 aa).

ATP is bound by residues 17–25 (AFSGGLDTS) and A43. Y99 is an L-citrulline binding site. Residues G129 and T131 each contribute to the ATP site. Positions 131, 135, and 136 each coordinate L-aspartate. Residue N135 participates in L-citrulline binding. Residue D136 participates in ATP binding. The L-citrulline site is built by R139 and S192. Residue D194 participates in ATP binding. The L-citrulline site is built by T201, E203, and E280.

Belongs to the argininosuccinate synthase family. Type 2 subfamily. In terms of assembly, homotetramer.

It is found in the cytoplasm. The catalysed reaction is L-citrulline + L-aspartate + ATP = 2-(N(omega)-L-arginino)succinate + AMP + diphosphate + H(+). The protein operates within amino-acid biosynthesis; L-arginine biosynthesis; L-arginine from L-ornithine and carbamoyl phosphate: step 2/3. The chain is Argininosuccinate synthase from Bordetella pertussis (strain Tohama I / ATCC BAA-589 / NCTC 13251).